A 438-amino-acid chain; its full sequence is 23S rRNA (uracil(1939)-C(5))-methyltransferase RlmD (438 aa).

Residues 13 to 71 (KAPLGPMQTYLVEGLTHEAKGVARLNGKVTFIEGALPGETVTAQVNKPGRRFDEAVLNA) enclose the TRAM domain. Residues cysteine 84, cysteine 90, cysteine 93, and cysteine 167 each contribute to the [4Fe-4S] cluster site. Positions 271, 300, 305, 321, 348, and 368 each coordinate S-adenosyl-L-methionine. Cysteine 394 serves as the catalytic Nucleophile.

This sequence belongs to the class I-like SAM-binding methyltransferase superfamily. RNA M5U methyltransferase family. RlmD subfamily.

It catalyses the reaction uridine(1939) in 23S rRNA + S-adenosyl-L-methionine = 5-methyluridine(1939) in 23S rRNA + S-adenosyl-L-homocysteine + H(+). Catalyzes the formation of 5-methyl-uridine at position 1939 (m5U1939) in 23S rRNA. The sequence is that of 23S rRNA (uracil(1939)-C(5))-methyltransferase RlmD from Marinomonas posidonica (strain CECT 7376 / NCIMB 14433 / IVIA-Po-181).